The chain runs to 268 residues: Ribosomal RNA small subunit methyltransferase A (268 aa).

S-adenosyl-L-methionine-binding residues include N19, L21, G46, E67, D92, and N113.

The protein belongs to the class I-like SAM-binding methyltransferase superfamily. rRNA adenine N(6)-methyltransferase family. RsmA subfamily.

Its subcellular location is the cytoplasm. The catalysed reaction is adenosine(1518)/adenosine(1519) in 16S rRNA + 4 S-adenosyl-L-methionine = N(6)-dimethyladenosine(1518)/N(6)-dimethyladenosine(1519) in 16S rRNA + 4 S-adenosyl-L-homocysteine + 4 H(+). Specifically dimethylates two adjacent adenosines (A1518 and A1519) in the loop of a conserved hairpin near the 3'-end of 16S rRNA in the 30S particle. May play a critical role in biogenesis of 30S subunits. This Tolumonas auensis (strain DSM 9187 / NBRC 110442 / TA 4) protein is Ribosomal RNA small subunit methyltransferase A.